We begin with the raw amino-acid sequence, 139 residues long: Large ribosomal subunit protein bL17 (139 aa).

The protein belongs to the bacterial ribosomal protein bL17 family. In terms of assembly, part of the 50S ribosomal subunit. Contacts protein L32.

This Myxococcus xanthus (strain DK1622) protein is Large ribosomal subunit protein bL17.